A 324-amino-acid chain; its full sequence is MANMFALILVIATLVTGILWCVDKFFFAPKRRERQAAAQAAAGDSLDKATLKKVAPKPGWLETGASVFPVLAIVLIVRSFIYEPFQIPSGSMMPTLLIGDFILVEKFAYGIKDPIYQKTLIETGHPKRGDIVVFKYPEDPKLDYIKRAVGLPGDKVTYDPVSKELTIQPGCSSGQACENALPVTYSNVEPSDFVQTFSRRNGGEATSGFFEVPKNETKENGIRLSERKETLGDVTHRILTVPIAQDQVGMYYQQPGQQLATWIVPPGQYFMMGDNRDNSADSRYWGFVPEANLVGRATAIWMSFDKQEGEWPTGLRLSRIGGIH.

Residue Met-1 is modified to Blocked amino end (Met). Topologically, residues 1 to 3 are periplasmic; that stretch reads MAN. The chain crosses the membrane as a helical span at residues 4 to 22; the sequence is MFALILVIATLVTGILWCV. Residues 23–58 lie on the Cytoplasmic side of the membrane; that stretch reads DKFFFAPKRRERQAAAQAAAGDSLDKATLKKVAPKP. A helical membrane pass occupies residues 59-77; it reads GWLETGASVFPVLAIVLIV. The Periplasmic segment spans residues 78–324; that stretch reads RSFIYEPFQI…LRLSRIGGIH (247 aa). Residues Ser-91 and Lys-146 contribute to the active site. Cys-171 and Cys-177 are disulfide-bonded.

This sequence belongs to the peptidase S26 family.

It is found in the cell inner membrane. The catalysed reaction is Cleavage of hydrophobic, N-terminal signal or leader sequences from secreted and periplasmic proteins.. The sequence is that of Signal peptidase I (lepB) from Escherichia coli (strain K12).